The following is a 283-amino-acid chain: Bifunctional protein FolD (283 aa).

NADP(+)-binding positions include 165–167, Ser190, and Ile231; that span reads GRS.

This sequence belongs to the tetrahydrofolate dehydrogenase/cyclohydrolase family. As to quaternary structure, homodimer.

It carries out the reaction (6R)-5,10-methylene-5,6,7,8-tetrahydrofolate + NADP(+) = (6R)-5,10-methenyltetrahydrofolate + NADPH. The enzyme catalyses (6R)-5,10-methenyltetrahydrofolate + H2O = (6R)-10-formyltetrahydrofolate + H(+). The protein operates within one-carbon metabolism; tetrahydrofolate interconversion. Catalyzes the oxidation of 5,10-methylenetetrahydrofolate to 5,10-methenyltetrahydrofolate and then the hydrolysis of 5,10-methenyltetrahydrofolate to 10-formyltetrahydrofolate. The sequence is that of Bifunctional protein FolD from Janthinobacterium sp. (strain Marseille) (Minibacterium massiliensis).